A 310-amino-acid chain; its full sequence is MATATNAAAAPPRQLSQKEADIQMMLAADVHLGTKNCDFQMERYIFKRRNDGIYIINLGKTWEKLQLAARVIVAIENPQDIIVQSARPYGQRAVLKFAQYTGAHAIAGRHTPGTFTNQLQTSFSEPRLLILTDPRTDHQPIKEAALGNIPTIAFCDTDSPMRYVDIGIPANNKGKHSIGCLFWLLARMVLQMRGTIRPGLKWDVMVDLFFYREPEEAKQQEEEEAPAVDYAITDFNAGAIAADGQWPGTIDQSWSDAVPQPIPAVPGVNWGAPAEAPAAAGGDWGEAVPPPQQIPVPPSGIDTVQPSGWD.

The segment at 264 to 310 (AVPGVNWGAPAEAPAAAGGDWGEAVPPPQQIPVPPSGIDTVQPSGWD) is disordered. Residues 270–287 (WGAPAEAPAAAGGDWGEA) are compositionally biased toward low complexity. Over residues 288-298 (VPPPQQIPVPP) the composition is skewed to pro residues.

Belongs to the universal ribosomal protein uS2 family. In terms of assembly, component of the small ribosomal subunit. Mature ribosomes consist of a small (40S) and a large (60S) subunit. The 40S subunit contains about 33 different proteins and 1 molecule of RNA (18S). The 60S subunit contains about 49 different proteins and 3 molecules of RNA (25S, 5.8S and 5S). Interacts with ribosomal protein S21.

The protein localises to the cytoplasm. Functionally, required for the assembly and/or stability of the 40S ribosomal subunit. Required for the processing of the 20S rRNA-precursor to mature 18S rRNA in a late step of the maturation of 40S ribosomal subunits. The sequence is that of Small ribosomal subunit protein uS2 from Glycine max (Soybean).